A 78-amino-acid chain; its full sequence is uncharacterized protein (78 aa).

A helical membrane pass occupies residues 44-66; sequence ALYSLGFFLCTTIVIFSNIKFVV.

The protein belongs to the TatC family.

It is found in the plastid. It localises to the chloroplast membrane. This is an uncharacterized protein from Dictyota dichotoma.